Reading from the N-terminus, the 189-residue chain is Development-specific protein LVN1.2 (189 aa).

As to expression, endoderm cells.

This Lytechinus variegatus (Green sea urchin) protein is Development-specific protein LVN1.2.